A 159-amino-acid polypeptide reads, in one-letter code: Serine-protein kinase RsbW (159 aa).

This sequence belongs to the anti-sigma-factor family.

The enzyme catalyses L-seryl-[protein] + ATP = O-phospho-L-seryl-[protein] + ADP + H(+). It carries out the reaction L-threonyl-[protein] + ATP = O-phospho-L-threonyl-[protein] + ADP + H(+). Negative regulator of sigma-B activity. Phosphorylates and inactivates its specific antagonist protein, RsbV. Upon phosphorylation of RsbV, RsbW is released and binds to sigma-B, thereby blocking its ability to form an RNA polymerase holoenzyme (E-sigma-B). The protein is Serine-protein kinase RsbW of Staphylococcus aureus (strain MRSA252).